A 470-amino-acid polypeptide reads, in one-letter code: Siroheme synthase (470 aa).

The precorrin-2 dehydrogenase /sirohydrochlorin ferrochelatase stretch occupies residues 1–203; the sequence is MDYLPIFVEL…GQIQQAEKQL (203 aa). Residues 22-23 and 43-44 contribute to the NAD(+) site; these read EV and PE. Ser128 is subject to Phosphoserine. The segment at 214–470 is uroporphyrinogen-III C-methyltransferase; that stretch reads GELALVGAGP…ISRPAVVDFA (257 aa). Pro223 is an S-adenosyl-L-methionine binding site. The Proton acceptor role is filled by Asp246. Residue Lys268 is the Proton donor of the active site. Residues 299-301, Ile304, 329-330, Met381, and Gly410 contribute to the S-adenosyl-L-methionine site; these read GGD and TA.

It in the N-terminal section; belongs to the precorrin-2 dehydrogenase / sirohydrochlorin ferrochelatase family. In the C-terminal section; belongs to the precorrin methyltransferase family.

It catalyses the reaction uroporphyrinogen III + 2 S-adenosyl-L-methionine = precorrin-2 + 2 S-adenosyl-L-homocysteine + H(+). It carries out the reaction precorrin-2 + NAD(+) = sirohydrochlorin + NADH + 2 H(+). The enzyme catalyses siroheme + 2 H(+) = sirohydrochlorin + Fe(2+). It functions in the pathway cofactor biosynthesis; adenosylcobalamin biosynthesis; precorrin-2 from uroporphyrinogen III: step 1/1. Its pathway is cofactor biosynthesis; adenosylcobalamin biosynthesis; sirohydrochlorin from precorrin-2: step 1/1. The protein operates within porphyrin-containing compound metabolism; siroheme biosynthesis; precorrin-2 from uroporphyrinogen III: step 1/1. It participates in porphyrin-containing compound metabolism; siroheme biosynthesis; siroheme from sirohydrochlorin: step 1/1. It functions in the pathway porphyrin-containing compound metabolism; siroheme biosynthesis; sirohydrochlorin from precorrin-2: step 1/1. In terms of biological role, multifunctional enzyme that catalyzes the SAM-dependent methylations of uroporphyrinogen III at position C-2 and C-7 to form precorrin-2 via precorrin-1. Then it catalyzes the NAD-dependent ring dehydrogenation of precorrin-2 to yield sirohydrochlorin. Finally, it catalyzes the ferrochelation of sirohydrochlorin to yield siroheme. This is Siroheme synthase from Photorhabdus laumondii subsp. laumondii (strain DSM 15139 / CIP 105565 / TT01) (Photorhabdus luminescens subsp. laumondii).